A 275-amino-acid chain; its full sequence is Transmembrane protein 106B (275 aa).

The disordered stretch occupies residues 1–24 (MGKSLSHLPLHSNKEDGYDGVTST). The N-myristoyl glycine moiety is linked to residue Gly-2. The Cytoplasmic segment spans residues 2–97 (GKSLSHLPLH…QRLRPRRTKL (96 aa)). Ser-34 is modified (phosphoserine). The helical transmembrane segment at 98-118 (YVMASVFVCLLLSGLAVFFLF) threads the bilayer. At 119–275 (PRSIDVKYIG…EYLNVLQPQQ (157 aa)) the chain is on the lumenal side. N-linked (GlcNAc...) asparagine glycosylation is found at Asn-146, Asn-152, Asn-165, and Asn-184. An intrachain disulfide couples Cys-215 to Cys-254. N-linked (GlcNAc...) asparagine glycosylation occurs at Asn-257.

It belongs to the TMEM106 family. In terms of assembly, can form homomers. Interacts (via N-terminus) with MAP6 (via C-terminus). Interacts (via C-terminus) with the vacuolar-type ATPase subunit ATP6AP1. Interacts (via N-terminus) with AP2M1 and CLTC. Interacts with TMEM106C. In terms of tissue distribution, expressed in cortical neurons (at protein level).

The protein resides in the late endosome membrane. It localises to the lysosome membrane. The protein localises to the cell membrane. Its function is as follows. Involved in dendrite morphogenesis and maintenance by regulating lysosomal trafficking. May act as a molecular brake for retrograde transport of late endosomes/lysosomes, possibly via its interaction with MAP6. In neurons, may also play a role in the regulation of lysosomal size and responsiveness to stress. Required for proper lysosomal acidification. Functionally, in neurons, involved in the transport of late endosomes/lysosomes. May be involved in dendrite morphogenesis and maintenance by regulating lysosomal trafficking. May act as a molecular brake for retrograde transport of late endosomes/lysosomes, possibly via its interaction with MAP6. In motoneurons, may mediate the axonal transport of lysosomes and axonal sorting at the initial segment. It remains unclear whether TMEM106B affects the transport of moving lysosomes in the anterograde or retrograde direction in neurites and whether it is particularly important in the sorting of lysosomes in axons or in dendrites. In neurons, may also play a role in the regulation of lysosomal size and responsiveness to stress. Required for proper lysosomal acidification. The sequence is that of Transmembrane protein 106B (Tmem106b) from Rattus norvegicus (Rat).